Here is a 115-residue protein sequence, read N- to C-terminus: Parathyroid hormone (115 aa).

The N-terminal stretch at 1-25 (MMSANTVAKVMIIMLAVCLLTQTDG) is a signal peptide. The propeptide occupies 26–31 (KPVRKR). An important for receptor binding region spans residues 51–69 (RMQWLRRKLQDMHNFVSLG).

This sequence belongs to the parathyroid hormone family. As to quaternary structure, interacts with PTH1R (via N-terminal extracellular domain). As to expression, highly expressed in the parathyroid gland. Also expressed in the placenta, thymus and testis.

Its subcellular location is the secreted. Its function is as follows. Parathyroid hormone elevates calcium level by dissolving the salts in bone and preventing their renal excretion. Acts by binding to its receptor, PTH1R, activating G protein-coupled receptor signaling. Stimulates [1-14C]-2-deoxy-D-glucose (2DG) transport and glycogen synthesis in osteoblastic cells. In Mus musculus (Mouse), this protein is Parathyroid hormone.